The chain runs to 558 residues: Protein OS-9 homolog (558 aa).

A signal peptide spans 1–17; that stretch reads MLLKSLALIASSSLAAT. A glycan (N-linked (GlcNAc...) asparagine) is linked at Asn68. Positions 111 to 237 constitute an MRH domain; it reads GDCLFYEQGF…QVGTPRLCKD (127 aa). Cysteines 113 and 126 form a disulfide. 4 residues coordinate a mannooligosaccharide derivative: Gln133, Arg197, Glu219, and Tyr225. 2 cysteine pairs are disulfide-bonded: Cys190/Cys223 and Cys205/Cys235. 2 disordered regions span residues 435-508 and 539-558; these read SKKL…DEDE and KDLA…GLSD. The span at 441–466 shows a compositional bias: basic and acidic residues; that stretch reads KKEAASTKREEAKKQVEASVEEKAVD. Polar residues predominate over residues 474–492; the sequence is DTVTSTQTFFRTQTLSTAE. Acidic residues predominate over residues 543-558; the sequence is DKEDDDDDYEDYGLSD.

The protein belongs to the OS-9 family. In terms of assembly, interacts with missfolded ER lumenal proteins.

Its subcellular location is the endoplasmic reticulum membrane. Its function is as follows. Lectin involved in the quality control of the secretory pathway. As a member of the endoplasmic reticulum-associated degradation lumenal (ERAD-L) surveillance system, targets misfolded endoplasmic reticulum lumenal glycoproteins for degradation. The chain is Protein OS-9 homolog (YOS9) from Yarrowia lipolytica (strain CLIB 122 / E 150) (Yeast).